The following is a 290-amino-acid chain: Concanavalin-A (290 aa).

Positions 1–29 (MAISKKSSLFLPIFTFITMFLMVVNKVSS) are cleaved as a signal peptide. Positions 119 and 139 each coordinate a carbohydrate. Asp119 provides a ligand contact to Ca(2+). A propeptide spanning residues 149–163 (VIRNSTTIDFNAAYN) is cleaved from the precursor. N-linked (GlcNAc...) asparagine glycosylation is present at Asn152. Positions 171 and 173 each coordinate Mn(2+). Ca(2+) contacts are provided by Asp173, Tyr175, Asn177, and Asp182. 2 residues coordinate Mn(2+): Asp182 and His187. 262 to 263 (LY) is a binding site for a carbohydrate. Residues 282-290 (EIPDIATVV) constitute a propeptide that is removed on maturation.

This sequence belongs to the leguminous lectin family. As to quaternary structure, homotetramer. The mature chain consists of residues 164-281 followed by 30-148. To form a mature chain the precursor undergoes further post-translational modification after removal of the signal sequence; cleavage after Asn at positions Asn-148, Asn-163, and Asn-281 is followed by transposition and ligation (By formation of a new peptide bond) of residues 164-281 and 30-148.

Glucose/D-mannose/rhamnose specific lectin. Has hemagglutinating activity towards rabbit erythrocytes. Has mitogenic activity towards murine splenocytes that is inhibited by glucose. Inhibits HIV-1 reverse transcriptase with an IC(50) of 35 uM. Has a potent antiproliferative activity against L1210 leukemia cells in vitro that is not inhibited by glucose. Inhibits translation in cell-free rabbit reticulocyte system with an IC(50) of 2.08 uM. Lacks anti-fungal activity against M.arachidicola, B.cenera and F.oxysporum. The chain is Concanavalin-A from Canavalia gladiata (Sword bean).